Reading from the N-terminus, the 131-residue chain is Large ribosomal subunit protein bL21 (131 aa).

Belongs to the bacterial ribosomal protein bL21 family. As to quaternary structure, part of the 50S ribosomal subunit. Contacts protein L20.

In terms of biological role, this protein binds to 23S rRNA in the presence of protein L20. The sequence is that of Large ribosomal subunit protein bL21 from Cereibacter sphaeroides (strain ATCC 17023 / DSM 158 / JCM 6121 / CCUG 31486 / LMG 2827 / NBRC 12203 / NCIMB 8253 / ATH 2.4.1.) (Rhodobacter sphaeroides).